A 435-amino-acid chain; its full sequence is UDP-glucuronic acid decarboxylase 1 (435 aa).

Residues 1–33 (MKQLHKQMSSKRDEETIPMSQSSPYSPKTLKHP) are disordered. Over 1-48 (MKQLHKQMSSKRDEETIPMSQSSPYSPKTLKHPRSLPRSLHYLFREQR) the chain is Cytoplasmic. A helical; Signal-anchor for type II membrane protein membrane pass occupies residues 49 to 69 (LLFILVGILIGSTFFILQPSL). At 70-435 (SRLGAAESTS…ILNEDEGKGL (366 aa)) the chain is on the lumenal side. A compositionally biased stretch (polar residues) spans 91 to 100 (DSPPSRSTFN). A disordered region spans residues 91 to 110 (DSPPSRSTFNSGGGGGRTGR). Gly129, Phe130, Val131, Asp150, Asn151, Phe153, Thr154, Gly155, Asp175, and Val176 together coordinate NAD(+). Residue Ile180 coordinates UDP-alpha-D-glucuronate. Leu190 contributes to the NAD(+) binding site. Lys208 is a binding site for UDP-alpha-D-glucuronate. Thr209 is a binding site for NAD(+). The UDP-alpha-D-glucuronate site is built by Asn216, Gly219, Lys222, and Arg223. NAD(+) is bound by residues Tyr262 and Lys266. Tyr262 (proton acceptor) is an active-site residue. Residue Tyr276 participates in UDP-alpha-D-glucuronate binding. The NAD(+) site is built by Thr292 and Arg303. Positions 380-401 (EFKPNTADDPHKRKPDISKAKE) are disordered. Residues 385 to 401 (TADDPHKRKPDISKAKE) show a composition bias toward basic and acidic residues.

Belongs to the NAD(P)-dependent epimerase/dehydratase family. UDP-glucuronic acid decarboxylase subfamily. It depends on NAD(+) as a cofactor. In terms of tissue distribution, ubiquitous.

The protein resides in the golgi apparatus. The protein localises to the golgi stack membrane. The catalysed reaction is UDP-alpha-D-glucuronate + H(+) = UDP-alpha-D-xylose + CO2. The protein operates within nucleotide-sugar biosynthesis; UDP-alpha-D-xylose biosynthesis; UDP-alpha-D-xylose from UDP-alpha-D-glucuronate: step 1/1. In terms of biological role, catalyzes the NAD-dependent decarboxylation of UDP-glucuronic acid to UDP-xylose. Necessary for the biosynthesis of the core tetrasaccharide in glycosaminoglycan biosynthesis. This Arabidopsis thaliana (Mouse-ear cress) protein is UDP-glucuronic acid decarboxylase 1.